The following is a 69-amino-acid chain: uncharacterized protein (69 aa).

The Cytoplasmic segment spans residues 1–15; it reads MLLYIVIIVACIISK. The helical transmembrane segment at 16-36 threads the bilayer; sequence LVPNEYWAIHLFFIIMIFMVY. Topologically, residues 37–69 are extracellular; it reads MYEKLDIHQKYQFWNYTMSGLSGHNVQITCKCY. A glycan (N-linked (GlcNAc...) asparagine; by host) is linked at asparagine 51.

This sequence belongs to the asfivirus X69R family.

The protein resides in the host membrane. This is an uncharacterized protein from Ornithodoros (relapsing fever ticks).